Here is a 355-residue protein sequence, read N- to C-terminus: Lamassu protein LmuA (355 aa).

Functionally, component of antiviral defense system Lamassu type II, composed of LmuA and LmuB. Expression of Lamassu type II in B.subtilis (strain BEST7003) confers resistance to phage SpBeta. May be a nuclease. This chain is Lamassu protein LmuA, found in Bacillus cereus (strain VD014).